Here is a 430-residue protein sequence, read N- to C-terminus: Trigger factor (430 aa).

Residues 165–250 (TDIAIFDFEG…LHQIKTKKIP (86 aa)) form the PPIase FKBP-type domain.

The protein belongs to the FKBP-type PPIase family. Tig subfamily.

The protein localises to the cytoplasm. It catalyses the reaction [protein]-peptidylproline (omega=180) = [protein]-peptidylproline (omega=0). In terms of biological role, involved in protein export. Acts as a chaperone by maintaining the newly synthesized protein in an open conformation. Functions as a peptidyl-prolyl cis-trans isomerase. This is Trigger factor from Onion yellows phytoplasma (strain OY-M).